The sequence spans 89 residues: RNA-binding protein Hfq (89 aa).

The region spanning 14–73 (DPYLNALRKEKINVAIYLVNGVKLQGRVDSFDQFVVLLRSNVTQMVYKHAISTIVPARDP) is the Sm domain.

Belongs to the Hfq family. Homohexamer.

In terms of biological role, RNA chaperone that binds small regulatory RNA (sRNAs) and mRNAs to facilitate mRNA translational regulation in response to envelope stress, environmental stress and changes in metabolite concentrations. Also binds with high specificity to tRNAs. This chain is RNA-binding protein Hfq, found in Hydrogenovibrio crunogenus (strain DSM 25203 / XCL-2) (Thiomicrospira crunogena).